The sequence spans 70 residues: Probable rubredoxin HupI (70 aa).

The Rubredoxin-like domain maps to 15–66 (DDRMECGICWHVYDPAEGDPVWQIPPGTPFSNLTEDWRCPNCDALQSKFMRL). Residues C20, C23, C53, and C56 each coordinate Fe cation.

This sequence belongs to the rubredoxin family. Fe(3+) is required as a cofactor.

In terms of biological role, could be an electron transport intermediate in hydrogen oxidation. The sequence is that of Probable rubredoxin HupI (hupI) from Rhizobium leguminosarum bv. viciae.